The sequence spans 257 residues: Putative hydro-lyase Bcenmc03_3969 (257 aa).

Belongs to the D-glutamate cyclase family.

The sequence is that of Putative hydro-lyase Bcenmc03_3969 from Burkholderia orbicola (strain MC0-3).